Here is a 620-residue protein sequence, read N- to C-terminus: Delta(14)-sterol reductase LBR (620 aa).

The Tudor domain maps to 1–62 (MPGRKFADGE…DIKPLKSFKQ (62 aa)). Topologically, residues 1–215 (MPGRKFADGE…TPQRRDLEFG (215 aa)) are nuclear. The tract at residues 52-111 (SDIKPLKSFKQRKSGSTSSSPSRRRSSRSRSRSRSRSPGRAPKGSRRSVSASYQADAKEK) is disordered. At Lys55 the chain carries N6-acetyllysine. Phosphoserine occurs at positions 59 and 67. Ser71 and Ser86 each carry phosphoserine; by CDK1. Residues 73–88 (SRRRSSRSRSRSRSRS) are compositionally biased toward basic residues. Ser88 bears the Phosphoserine mark. Ser96 carries an O-linked (GlcNAc) serine glycan. Ser99 and Ser101 each carry phosphoserine. The residue at position 123 (Thr123) is a Phosphothreonine. A Phosphoserine modification is found at Ser133. Residue Thr205 is modified to Phosphothreonine. 8 helical membrane-spanning segments follow: residues 216-236 (GVPGALLIMLGLPACVFLLLL), 263-283 (VCGVYLLWFFLQALFSLLPVG), 304-324 (LYAFILTSAAVGTAVFWDIEL), 331-351 (FLQFALAAIVFSVVLSVYLYA), 452-472 (IIHDGFGFMLAFGDLVWVPFT), 486-506 (DLSWPLTSVIIALKLCGYVIF), 525-547 (LAHLKTIPTSTWKSLLVSGWWGF), and 566-586 (PCGFNHILPYFYVIYFTALLI). N6-acetyllysine occurs at positions 599 and 606.

It belongs to the ERG4/ERG24 family. As to quaternary structure, interacts with CBX5. Interacts with DNA. Interaction with DNA is sequence independent with higher affinity for supercoiled and relaxed circular DNA than linear DNA. Interacts with lamin B. Interacts with CLNK. Interacts with TMEM147; promoting LBR localization to the nucleus inner membrane. Phosphorylated by CDK1 in mitosis when the inner nuclear membrane breaks down into vesicles that dissociate from the lamina and the chromatin. It is phosphorylated by different protein kinases in interphase when the membrane is associated with these structures. Phosphorylation of LBR and HP1 proteins may be responsible for some of the alterations in chromatin organization and nuclear structure which occur at various times during the cell cycle. Phosphorylated by SRPK1. In late anaphase LBR is dephosphorylated, probably by PP1 and/or PP2A, allowing reassociation with chromatin.

It is found in the nucleus inner membrane. The protein resides in the nucleus. Its subcellular location is the cytoplasm. The protein localises to the endoplasmic reticulum membrane. The catalysed reaction is 5alpha-cholest-8,14-dien-3beta-ol + NADPH + H(+) = 5alpha-cholest-8-en-3beta-ol + NADP(+). The enzyme catalyses 4,4-dimethyl-5alpha-cholesta-8,24-dien-3beta-ol + NADP(+) = 4,4-dimethyl-5alpha-cholesta-8,14,24-trien-3beta-ol + NADPH + H(+). It catalyses the reaction 4,4-dimethyl-8,14-cholestadien-3beta-ol + NADPH + H(+) = 4,4-dimethyl-5alpha-cholest-8-en-3beta-ol + NADP(+). Its pathway is steroid biosynthesis; cholesterol biosynthesis. Functionally, catalyzes the reduction of the C14-unsaturated bond of lanosterol, as part of the metabolic pathway leading to cholesterol biosynthesis. Plays a critical role in myeloid cell cholesterol biosynthesis which is essential to both myeloid cell growth and functional maturation. Mediates the activation of NADPH oxidases, perhaps by maintaining critical levels of cholesterol required for membrane lipid raft formation during neutrophil differentiation. Anchors the lamina and the heterochromatin to the inner nuclear membrane. The chain is Delta(14)-sterol reductase LBR (Lbr) from Rattus norvegicus (Rat).